Here is a 380-residue protein sequence, read N- to C-terminus: Queuine tRNA-ribosyltransferase (380 aa).

The active-site Proton acceptor is Asp-96. Residues 96–100 (DSGGF), Asp-150, Gln-193, and Gly-220 contribute to the substrate site. Residues 251-257 (GVGAPDS) are RNA binding. The active-site Nucleophile is the Asp-270. An RNA binding; important for wobble base 34 recognition region spans residues 275–279 (TRIAR). Zn(2+) contacts are provided by Cys-308, Cys-310, Cys-313, and His-339.

It belongs to the queuine tRNA-ribosyltransferase family. Homodimer. Within each dimer, one monomer is responsible for RNA recognition and catalysis, while the other monomer binds to the replacement base PreQ1. Zn(2+) serves as cofactor.

It carries out the reaction 7-aminomethyl-7-carbaguanine + guanosine(34) in tRNA = 7-aminomethyl-7-carbaguanosine(34) in tRNA + guanine. The protein operates within tRNA modification; tRNA-queuosine biosynthesis. Functionally, catalyzes the base-exchange of a guanine (G) residue with the queuine precursor 7-aminomethyl-7-deazaguanine (PreQ1) at position 34 (anticodon wobble position) in tRNAs with GU(N) anticodons (tRNA-Asp, -Asn, -His and -Tyr). Catalysis occurs through a double-displacement mechanism. The nucleophile active site attacks the C1' of nucleotide 34 to detach the guanine base from the RNA, forming a covalent enzyme-RNA intermediate. The proton acceptor active site deprotonates the incoming PreQ1, allowing a nucleophilic attack on the C1' of the ribose to form the product. After dissociation, two additional enzymatic reactions on the tRNA convert PreQ1 to queuine (Q), resulting in the hypermodified nucleoside queuosine (7-(((4,5-cis-dihydroxy-2-cyclopenten-1-yl)amino)methyl)-7-deazaguanosine). This Streptococcus sanguinis (strain SK36) protein is Queuine tRNA-ribosyltransferase.